A 290-amino-acid polypeptide reads, in one-letter code: Pyridoxal kinase PdxY (290 aa).

Substrate-binding positions include S12 and 47 to 48 (TQ). ATP-binding positions include D114, E151, K184, and 211 to 214 (RPLL). D225 is a binding site for substrate.

The protein belongs to the pyridoxine kinase family. PdxY subfamily. In terms of assembly, homodimer. Requires Mg(2+) as cofactor.

The catalysed reaction is pyridoxal + ATP = pyridoxal 5'-phosphate + ADP + H(+). The protein operates within cofactor metabolism; pyridoxal 5'-phosphate salvage; pyridoxal 5'-phosphate from pyridoxal: step 1/1. Pyridoxal kinase involved in the salvage pathway of pyridoxal 5'-phosphate (PLP). Catalyzes the phosphorylation of pyridoxal to PLP. The sequence is that of Pyridoxal kinase PdxY from Pseudomonas fluorescens (strain ATCC BAA-477 / NRRL B-23932 / Pf-5).